We begin with the raw amino-acid sequence, 767 residues long: Transferrin receptor protein 1 (767 aa).

The Cytoplasmic portion of the chain corresponds to 1–67 (MDQARSAFSN…LTKPKRFNGS (67 aa)). Serine 9 and serine 18 each carry phosphoserine. At tyrosine 19 the chain carries Phosphotyrosine. Positions 19 to 22 (YTRF) match the Endocytosis signal motif. Position 20 is a phosphothreonine (threonine 20). A Phosphoserine modification is found at serine 23. The Stop-transfer sequence motif lies at 60–63 (KPKR). A helical; Signal-anchor for type II membrane protein membrane pass occupies residues 68-88 (FCYAVIAVIIFFLIGFMIGYL). Cysteine 69 carries the S-palmitoyl cysteine lipid modification. The Extracellular segment spans residues 89–767 (GYCKRVEPKS…GDIWDIDNEF (679 aa)). Residues 96 to 110 (PKSECGRSGDSKEIE) show a composition bias toward basic and acidic residues. Positions 96 to 122 (PKSECGRSGDSKEIEGTEPPETEEYFP) are disordered. The span at 111–121 (GTEPPETEEYF) shows a compositional bias: acidic residues. N-linked (GlcNAc...) asparagine glycans are attached at residues asparagine 211, asparagine 258, and asparagine 324. The 91-residue stretch at 230–320 (SKATTVTGKL…GTGDPYTPGF (91 aa)) folds into the PA domain. Residues 576–767 (TMDTYEVLSQ…GDIWDIDNEF (192 aa)) are ligand-binding. Residues 653 to 655 (RGD) carry the Cell attachment site motif. Asparagine 734 carries N-linked (GlcNAc...) asparagine glycosylation.

Belongs to the peptidase M28 family. M28B subfamily. Homodimer; disulfide-linked. Binds one transferrin or HFE molecule per subunit. Interacts with SH3BP4. Interacts with STEAP3; facilitates TFRC endocytosis in erythroid precursor cells. Post-translationally, stearoylated by ZDHHC6 which inhibits TFRC-mediated activation of the JNK pathway and promotes mitochondrial fragmentation. Stearoylation does not affect iron uptake.

The protein localises to the cell membrane. Its subcellular location is the melanosome. Cellular uptake of iron occurs via receptor-mediated endocytosis of ligand-occupied transferrin receptor into specialized endosomes. Endosomal acidification leads to iron release. The apotransferrin-receptor complex is then recycled to the cell surface with a return to neutral pH and the concomitant loss of affinity of apotransferrin for its receptor. Transferrin receptor is necessary for development of erythrocytes and the nervous system. Positively regulates T and B cell proliferation through iron uptake. Acts as a lipid sensor that regulates mitochondrial fusion by regulating activation of the JNK pathway. When dietary levels of stearate (C18:0) are low, promotes activation of the JNK pathway, resulting in HUWE1-mediated ubiquitination and subsequent degradation of the mitofusin MFN2 and inhibition of mitochondrial fusion. When dietary levels of stearate (C18:0) are high, TFRC stearoylation inhibits activation of the JNK pathway and thus degradation of the mitofusin MFN2. Mediates uptake of NICOL1 into fibroblasts where it may regulate extracellular matrix production. The protein is Transferrin receptor protein 1 (TFRC) of Equus caballus (Horse).